We begin with the raw amino-acid sequence, 194 residues long: IMP cyclohydrolase (194 aa).

It belongs to the archaeal IMP cyclohydrolase family.

It carries out the reaction IMP + H2O = 5-formamido-1-(5-phospho-D-ribosyl)imidazole-4-carboxamide. It functions in the pathway purine metabolism; IMP biosynthesis via de novo pathway; IMP from 5-formamido-1-(5-phospho-D-ribosyl)imidazole-4-carboxamide: step 1/1. Its function is as follows. Catalyzes the cyclization of 5-formylamidoimidazole-4-carboxamide ribonucleotide to IMP. The chain is IMP cyclohydrolase from Halobacterium salinarum (strain ATCC 29341 / DSM 671 / R1).